We begin with the raw amino-acid sequence, 778 residues long: MKQIRLLAQYYVDLMMKLGLVRFSMLLALALVVLAIVVQMAVTMVLHGQVESIDVIRSIFFGLLITPWAVYFLSVVVEQLEESRQRLSRLVQKLEEMRERDLSLNVQLKDNIAQLNQEIAVREKAEAELQETFGQLKIEIKEREETQIQLEQQSSFLRSFLDASPDLVFYRNEDKEFSGCNRAMELLTGKSEKQLVHLKPADVYSPEAAAKVIETDEKVFRHNVSLTYEQWLDYPDGRKACFEIRKVPYYDRVGKRHGLMGFGRDITERKRYQDALERASRDKTTFISTISHELRTPLNGIVGLSRILLDTELTAEQEKYLKTIHVSAVTLGNIFNDIIDMDKMERRKVQLDNQPVDFTSFLADLENLSALQAQQKGLRFNLEPTLPLPHQVITDGTRLRQILWNLISNAVKFTQQGQVTVRVRYDEGDMLHFEVEDSGIGIPQDELDKIFAMYYQVKDSHGGKPATGTGIGLAVSRRLAKNMGGDITVTSEQGKGSTFTLTIHAPSVAEEVDDAFDEDDMPLPALNVLLVEDIELNVIVARSVLEKLGNSVDVAMTGKAALEMFKPGEYDLVLLDIQLPDMTGLDISRELTKRYPREDLPPLVALTANVLKDKQEYLNAGMDDVLSKPLSVPALTAMIKKFWDTQDDEESTVTTEENSKSEALLDIPMLEQYLELVGPKLITDGLAVFEKMMPGYVSVLESNLTAQDKKGIVEEGHKIKGAAGSVGLRHLQQLGQQIQSPDLPAWEDNVGEWIEEMKEEWRHDVEVLKAWVAKATKK.

The Cytoplasmic portion of the chain corresponds to 1 to 25; sequence MKQIRLLAQYYVDLMMKLGLVRFSM. The helical transmembrane segment at 26 to 46 threads the bilayer; sequence LLALALVVLAIVVQMAVTMVL. Over 47–57 the chain is Periplasmic; it reads HGQVESIDVIR. The helical transmembrane segment at 58 to 78 threads the bilayer; it reads SIFFGLLITPWAVYFLSVVVE. At 79-778 the chain is on the cytoplasmic side; the sequence is QLEESRQRLS…KAWVAKATKK (700 aa). Residues 153–223 form the PAS domain; that stretch reads QSSFLRSFLD…ETDEKVFRHN (71 aa). One can recognise a PAC domain in the interval 226–278; the sequence is LTYEQWLDYPDGRKACFEIRKVPYYDRVGKRHGLMGFGRDITERKRYQDALER. A Histidine kinase domain is found at 289–507; sequence TISHELRTPL…TFTLTIHAPS (219 aa). His292 is subject to Phosphohistidine; by autocatalysis. A Response regulatory domain is found at 527–643; the sequence is NVLLVEDIEL…ALTAMIKKFW (117 aa). 4-aspartylphosphate is present on Asp576. The HPt domain maps to 678–771; the sequence is GPKLITDGLA…RHDVEVLKAW (94 aa). A Phosphohistidine modification is found at His717.

Activation requires a sequential transfer of a phosphate group from a His in the primary transmitter domain, to an Asp in the receiver domain and to a His in the secondary transmitter domain.

The protein resides in the cell inner membrane. The catalysed reaction is ATP + protein L-histidine = ADP + protein N-phospho-L-histidine.. In terms of biological role, member of the two-component regulatory system ArcB/ArcA. Sensor-regulator protein for anaerobic repression of the arc modulon. Activates ArcA via a four-step phosphorelay. ArcB can also dephosphorylate ArcA by a reverse phosphorelay involving His-717 and Asp-576. The protein is Aerobic respiration control sensor protein ArcB (arcB) of Escherichia coli (strain K12).